Reading from the N-terminus, the 307-residue chain is 4-hydroxy-3-methylbut-2-enyl diphosphate reductase (307 aa).

Cys12 provides a ligand contact to [4Fe-4S] cluster. (2E)-4-hydroxy-3-methylbut-2-enyl diphosphate contacts are provided by His41 and His74. 2 residues coordinate dimethylallyl diphosphate: His41 and His74. Residues His41 and His74 each coordinate isopentenyl diphosphate. Cys96 is a binding site for [4Fe-4S] cluster. His124 lines the (2E)-4-hydroxy-3-methylbut-2-enyl diphosphate pocket. A dimethylallyl diphosphate-binding site is contributed by His124. His124 lines the isopentenyl diphosphate pocket. Glu126 (proton donor) is an active-site residue. Thr165 lines the (2E)-4-hydroxy-3-methylbut-2-enyl diphosphate pocket. Residue Cys195 participates in [4Fe-4S] cluster binding. (2E)-4-hydroxy-3-methylbut-2-enyl diphosphate is bound by residues Ser223, Ser224, Asn225, and Ser267. Dimethylallyl diphosphate-binding residues include Ser223, Ser224, Asn225, and Ser267. 4 residues coordinate isopentenyl diphosphate: Ser223, Ser224, Asn225, and Ser267.

Belongs to the IspH family. [4Fe-4S] cluster serves as cofactor.

It carries out the reaction isopentenyl diphosphate + 2 oxidized [2Fe-2S]-[ferredoxin] + H2O = (2E)-4-hydroxy-3-methylbut-2-enyl diphosphate + 2 reduced [2Fe-2S]-[ferredoxin] + 2 H(+). The catalysed reaction is dimethylallyl diphosphate + 2 oxidized [2Fe-2S]-[ferredoxin] + H2O = (2E)-4-hydroxy-3-methylbut-2-enyl diphosphate + 2 reduced [2Fe-2S]-[ferredoxin] + 2 H(+). It participates in isoprenoid biosynthesis; dimethylallyl diphosphate biosynthesis; dimethylallyl diphosphate from (2E)-4-hydroxy-3-methylbutenyl diphosphate: step 1/1. It functions in the pathway isoprenoid biosynthesis; isopentenyl diphosphate biosynthesis via DXP pathway; isopentenyl diphosphate from 1-deoxy-D-xylulose 5-phosphate: step 6/6. In terms of biological role, catalyzes the conversion of 1-hydroxy-2-methyl-2-(E)-butenyl 4-diphosphate (HMBPP) into a mixture of isopentenyl diphosphate (IPP) and dimethylallyl diphosphate (DMAPP). Acts in the terminal step of the DOXP/MEP pathway for isoprenoid precursor biosynthesis. The sequence is that of 4-hydroxy-3-methylbut-2-enyl diphosphate reductase from Magnetococcus marinus (strain ATCC BAA-1437 / JCM 17883 / MC-1).